A 172-amino-acid chain; its full sequence is MHYARIVSNLRLGYDIIHMAEYVTLTTNRKAFHNYFLEEKYEAGIMLLGTEIKSLRSGRVNMGDAYVKPQRGELWLVNAHISAYECSGHTSHEPMRERKLLMHRKEIVLLMSKVKEKGLTLIPVRIYLKNDIAKVELSLGRGKKLYDKRDTVTKRDTERELEREVKYRNFRR.

The protein belongs to the SmpB family.

The protein localises to the cytoplasm. In terms of biological role, required for rescue of stalled ribosomes mediated by trans-translation. Binds to transfer-messenger RNA (tmRNA), required for stable association of tmRNA with ribosomes. tmRNA and SmpB together mimic tRNA shape, replacing the anticodon stem-loop with SmpB. tmRNA is encoded by the ssrA gene; the 2 termini fold to resemble tRNA(Ala) and it encodes a 'tag peptide', a short internal open reading frame. During trans-translation Ala-aminoacylated tmRNA acts like a tRNA, entering the A-site of stalled ribosomes, displacing the stalled mRNA. The ribosome then switches to translate the ORF on the tmRNA; the nascent peptide is terminated with the 'tag peptide' encoded by the tmRNA and targeted for degradation. The ribosome is freed to recommence translation, which seems to be the essential function of trans-translation. This Dehalococcoides mccartyi (strain ATCC BAA-2100 / JCM 16839 / KCTC 5957 / BAV1) protein is SsrA-binding protein.